Consider the following 1252-residue polypeptide: DNA-directed RNA polymerase subunit beta (1252 aa).

This sequence belongs to the RNA polymerase beta chain family. The RNAP catalytic core consists of 2 alpha, 1 beta, 1 beta' and 1 omega subunit. When a sigma factor is associated with the core the holoenzyme is formed, which can initiate transcription.

It catalyses the reaction RNA(n) + a ribonucleoside 5'-triphosphate = RNA(n+1) + diphosphate. In terms of biological role, DNA-dependent RNA polymerase catalyzes the transcription of DNA into RNA using the four ribonucleoside triphosphates as substrates. This Chlamydia trachomatis serovar D (strain ATCC VR-885 / DSM 19411 / UW-3/Cx) protein is DNA-directed RNA polymerase subunit beta.